Consider the following 663-residue polypeptide: Methionine--tRNA ligase (663 aa).

Residues Ala10 to His20 carry the 'HIGH' region motif. 4 residues coordinate Zn(2+): Cys142, Cys145, Cys154, and Cys157. The 'KMSKS' region signature appears at Lys323–Ser327. Residue Thr326 coordinates ATP. The 101-residue stretch at Tyr563 to His663 folds into the tRNA-binding domain.

This sequence belongs to the class-I aminoacyl-tRNA synthetase family. MetG type 1 subfamily. Homodimer. Zn(2+) is required as a cofactor.

The protein localises to the cytoplasm. It catalyses the reaction tRNA(Met) + L-methionine + ATP = L-methionyl-tRNA(Met) + AMP + diphosphate. In terms of biological role, is required not only for elongation of protein synthesis but also for the initiation of all mRNA translation through initiator tRNA(fMet) aminoacylation. The chain is Methionine--tRNA ligase from Methanococcus maripaludis (strain C5 / ATCC BAA-1333).